The following is a 241-amino-acid chain: Ribosomal RNA small subunit methyltransferase J (241 aa).

S-adenosyl-L-methionine-binding positions include 94–95 (RD) and Asp163.

The protein belongs to the methyltransferase superfamily. RsmJ family.

It localises to the cytoplasm. It carries out the reaction guanosine(1516) in 16S rRNA + S-adenosyl-L-methionine = N(2)-methylguanosine(1516) in 16S rRNA + S-adenosyl-L-homocysteine + H(+). Specifically methylates the guanosine in position 1516 of 16S rRNA. In Francisella tularensis subsp. tularensis (strain FSC 198), this protein is Ribosomal RNA small subunit methyltransferase J.